Consider the following 370-residue polypeptide: Glutamate 5-kinase (370 aa).

Lysine 17 contributes to the ATP binding site. 3 residues coordinate substrate: serine 57, aspartate 144, and asparagine 156. Residues 176-177 (SD) and 220-226 (TGGMVSK) each bind ATP. A PUA domain is found at 282–360 (SGTLTLDDGA…SDLPAEMRRP (79 aa)).

This sequence belongs to the glutamate 5-kinase family.

The protein resides in the cytoplasm. The catalysed reaction is L-glutamate + ATP = L-glutamyl 5-phosphate + ADP. It participates in amino-acid biosynthesis; L-proline biosynthesis; L-glutamate 5-semialdehyde from L-glutamate: step 1/2. Functionally, catalyzes the transfer of a phosphate group to glutamate to form L-glutamate 5-phosphate. The chain is Glutamate 5-kinase from Mycolicibacterium gilvum (strain PYR-GCK) (Mycobacterium gilvum (strain PYR-GCK)).